The chain runs to 208 residues: UPF0637 protein Bcer98_2662 (208 aa).

This sequence belongs to the UPF0637 family.

This Bacillus cytotoxicus (strain DSM 22905 / CIP 110041 / 391-98 / NVH 391-98) protein is UPF0637 protein Bcer98_2662.